A 374-amino-acid chain; its full sequence is N5-carboxyaminoimidazole ribonucleotide synthase (374 aa).

Residues arginine 108, lysine 148, 153–159 (GYDGKGQ), 183–186 (EKYL), glutamate 191, histidine 214, and 266–267 (NE) each bind ATP. Positions 112–296 (KETLKSAGTK…QFDTHILAVT (185 aa)) constitute an ATP-grasp domain.

This sequence belongs to the PurK/PurT family. In terms of assembly, homodimer.

The catalysed reaction is 5-amino-1-(5-phospho-beta-D-ribosyl)imidazole + hydrogencarbonate + ATP = 5-carboxyamino-1-(5-phospho-D-ribosyl)imidazole + ADP + phosphate + 2 H(+). It functions in the pathway purine metabolism; IMP biosynthesis via de novo pathway; 5-amino-1-(5-phospho-D-ribosyl)imidazole-4-carboxylate from 5-amino-1-(5-phospho-D-ribosyl)imidazole (N5-CAIR route): step 1/2. Catalyzes the ATP-dependent conversion of 5-aminoimidazole ribonucleotide (AIR) and HCO(3)(-) to N5-carboxyaminoimidazole ribonucleotide (N5-CAIR). The polypeptide is N5-carboxyaminoimidazole ribonucleotide synthase (Staphylococcus aureus (strain MRSA252)).